Here is a 560-residue protein sequence, read N- to C-terminus: Secreted RxLR effector protein 142 (560 aa).

A signal peptide spans Met1–Gly22. 2 disordered regions span residues Gln48–Pro73 and Ile354–Gln377. Residues Glu54 to Thr72 show a composition bias toward basic and acidic residues. The short motif at Arg56–Arg71 is the RxLR-dEER element. A compositionally biased stretch (polar residues) spans Gly361–Gln377.

This sequence belongs to the RxLR effector family.

The protein resides in the secreted. It is found in the host nucleus. Functionally, secreted effector that completely suppresses the host cell death induced by cell death-inducing proteins. This is Secreted RxLR effector protein 142 from Plasmopara viticola (Downy mildew of grapevine).